The chain runs to 993 residues: Ephrin type-A receptor 7 (993 aa).

Residues 1 to 27 form the signal peptide; that stretch reads MVLRSRLPPWIMLCSVWLLRFAHTGEA. At 28–550 the chain is on the extracellular side; that stretch reads QAAKEVILLD…TAVSSEQNPV (523 aa). An Eph LBD domain is found at 32–210; it reads EVILLDSKAQ…YYKKCWSIIE (179 aa). 2 consecutive Fibronectin type-III domains span residues 331 to 441 and 442 to 537; these read PPSA…TGQA and APSQ…TLEE. N-linked (GlcNAc...) asparagine glycosylation is found at Asn343 and Asn410. A helical transmembrane segment spans residues 551–571; the sequence is IIIAVVAVAGTIILVFMVFGF. Over 572-993 the chain is Cytoplasmic; sequence IIGRRHCGYS…LHLHGTGIQV (422 aa). 2 positions are modified to phosphotyrosine; by autocatalysis: Tyr603 and Tyr609. The Protein kinase domain maps to 628–889; the sequence is IKIERVIGAG…QIVGILDKMI (262 aa). Residues 634–642 and Lys660 contribute to the ATP site; that span reads IGAGEFGEV. Asp753 acts as the Proton acceptor in catalysis. Phosphotyrosine; by autocatalysis is present on residues Tyr786 and Tyr935. The SAM domain occupies 918-982; it reads TTFCSVGEWL…MSSIQTMRAQ (65 aa). The PDZ-binding motif lies at 991-993; it reads IQV.

It belongs to the protein kinase superfamily. Tyr protein kinase family. Ephrin receptor subfamily. As to quaternary structure, heterotetramer upon binding of the ligand. The heterotetramer is composed of an ephrin dimer and a receptor dimer. Oligomerization is probably required to induce biological responses. Post-translationally, phosphorylated.

The protein resides in the cell membrane. It catalyses the reaction L-tyrosyl-[protein] + ATP = O-phospho-L-tyrosyl-[protein] + ADP + H(+). Receptor tyrosine kinase which binds promiscuously GPI-anchored ephrin-A family ligands residing on adjacent cells, leading to contact-dependent bidirectional signaling into neighboring cells. The signaling pathway downstream of the receptor is referred to as forward signaling while the signaling pathway downstream of the ephrin ligand is referred to as reverse signaling. Among GPI-anchored ephrin-A ligands, EFNA5 is a cognate/functional ligand for EPHA7 and their interaction regulates brain development modulating cell-cell adhesion and repulsion. Has a repellent activity on axons and is for instance involved in the guidance of corticothalamic axons and in the proper topographic mapping of retinal axons to the colliculus. May also regulate brain development through a caspase(CASP3)-dependent proapoptotic activity. Forward signaling may result in activation of components of the ERK signaling pathway including MAP2K1, MAP2K2, MAPK1 and MAPK3 which are phosphorylated upon activation of EPHA7. This is Ephrin type-A receptor 7 (EPHA7) from Gallus gallus (Chicken).